We begin with the raw amino-acid sequence, 135 residues long: Large ribosomal subunit protein uL16 (135 aa).

Belongs to the universal ribosomal protein uL16 family. As to quaternary structure, part of the 50S ribosomal subunit.

Its function is as follows. Binds 23S rRNA and is also seen to make contacts with the A and possibly P site tRNAs. In Carsonella ruddii (strain PV), this protein is Large ribosomal subunit protein uL16 (rplP).